A 408-amino-acid chain; its full sequence is MGRRGVTKKRNRIDRVKTRVVVLGSTGSIGTQALEVMADNPERFELVGISAHGSKPDVLAQQVRDFGLDLGRVAVASEHTAEWLDGEFGAHCIRGKDSARELVEAVGPELGECDVILNALVGSLGLDATLATLGTKAKLALANKESLVAGGQLVLKAADEGQLIPVDSEHSAMAQCLRSGRVDEVDSLVLTASGGPFRGYTRAQLEDVTPLQAANHPTWSMGQMNTLNSATMVNKGLELIEASLLFGIPAEKIDVTVHPQSIVHSMVTFIDGATIAQASPPSMKLPISLALGWPDRIADAQPKLDFTEATDWHFEPLDDEVFPAVILARQAVTAGGTMPAVYNAANEEAAVEFLNGRLSFPRIVDTVAATMEACQHLSAEPNDLEDVLAAEREARAKAHERMATWLSD.

NADPH is bound by residues threonine 26, glycine 27, serine 28, isoleucine 29, and asparagine 143. Lysine 144 serves as a coordination point for 1-deoxy-D-xylulose 5-phosphate. Glutamate 145 is an NADPH binding site. Aspartate 167 lines the Mn(2+) pocket. 1-deoxy-D-xylulose 5-phosphate is bound by residues serine 168, glutamate 169, serine 193, and histidine 216. Glutamate 169 is a binding site for Mn(2+). Glycine 222 provides a ligand contact to NADPH. 1-deoxy-D-xylulose 5-phosphate is bound by residues serine 229, asparagine 234, lysine 235, and glutamate 238. Glutamate 238 serves as a coordination point for Mn(2+).

It belongs to the DXR family. Requires Mg(2+) as cofactor. It depends on Mn(2+) as a cofactor.

The enzyme catalyses 2-C-methyl-D-erythritol 4-phosphate + NADP(+) = 1-deoxy-D-xylulose 5-phosphate + NADPH + H(+). Its pathway is isoprenoid biosynthesis; isopentenyl diphosphate biosynthesis via DXP pathway; isopentenyl diphosphate from 1-deoxy-D-xylulose 5-phosphate: step 1/6. Catalyzes the NADPH-dependent rearrangement and reduction of 1-deoxy-D-xylulose-5-phosphate (DXP) to 2-C-methyl-D-erythritol 4-phosphate (MEP). The polypeptide is 1-deoxy-D-xylulose 5-phosphate reductoisomerase (Corynebacterium jeikeium (strain K411)).